Consider the following 309-residue polypeptide: Acetyl-coenzyme A carboxylase carboxyl transferase subunit beta (309 aa).

Residues 27-296 (LWKKCPKCGA…PGTEAPIEFE (270 aa)) form the CoA carboxyltransferase N-terminal domain. Zn(2+)-binding residues include cysteine 31, cysteine 34, cysteine 50, and cysteine 53. The segment at 31-53 (CPKCGAFLYKPELEKNLDVCPKC) adopts a C4-type zinc-finger fold. The tract at residues 288-309 (GTEAPIEFEVTEKPDVDEPEGQ) is disordered.

The protein belongs to the AccD/PCCB family. As to quaternary structure, acetyl-CoA carboxylase is a heterohexamer composed of biotin carboxyl carrier protein (AccB), biotin carboxylase (AccC) and two subunits each of ACCase subunit alpha (AccA) and ACCase subunit beta (AccD). Requires Zn(2+) as cofactor.

It localises to the cytoplasm. It catalyses the reaction N(6)-carboxybiotinyl-L-lysyl-[protein] + acetyl-CoA = N(6)-biotinyl-L-lysyl-[protein] + malonyl-CoA. It participates in lipid metabolism; malonyl-CoA biosynthesis; malonyl-CoA from acetyl-CoA: step 1/1. Its function is as follows. Component of the acetyl coenzyme A carboxylase (ACC) complex. Biotin carboxylase (BC) catalyzes the carboxylation of biotin on its carrier protein (BCCP) and then the CO(2) group is transferred by the transcarboxylase to acetyl-CoA to form malonyl-CoA. This Marinobacter nauticus (strain ATCC 700491 / DSM 11845 / VT8) (Marinobacter aquaeolei) protein is Acetyl-coenzyme A carboxylase carboxyl transferase subunit beta.